The sequence spans 89 residues: Translation initiation factor IF-1 1 (89 aa).

Residues Met-1–Leu-73 form the S1-like domain.

Belongs to the IF-1 family. As to quaternary structure, component of the 30S ribosomal translation pre-initiation complex which assembles on the 30S ribosome in the order IF-2 and IF-3, IF-1 and N-formylmethionyl-tRNA(fMet); mRNA recruitment can occur at any time during PIC assembly.

The protein resides in the cytoplasm. Its function is as follows. One of the essential components for the initiation of protein synthesis. Stabilizes the binding of IF-2 and IF-3 on the 30S subunit to which N-formylmethionyl-tRNA(fMet) subsequently binds. Helps modulate mRNA selection, yielding the 30S pre-initiation complex (PIC). Upon addition of the 50S ribosomal subunit IF-1, IF-2 and IF-3 are released leaving the mature 70S translation initiation complex. The sequence is that of Translation initiation factor IF-1 1 from Acidovorax sp. (strain JS42).